The sequence spans 854 residues: Translation initiation factor IF-2 (854 aa).

Disordered regions lie at residues 52-79 and 128-265; these read RQHG…RDGG and RKQE…HGFQ. The span at 61–75 shows a compositional bias: polar residues; that stretch reads SQRITLQRKTTSTLS. Basic and acidic residues-rich tracts occupy residues 128–150 and 211–232; these read RKQE…RQEA and VRHD…DNKR. Residues 247-257 are compositionally biased toward basic residues; sequence RGKLGRKNKKP. The tr-type G domain occupies 354 to 523; that stretch reads KRAPVVTVMG…LLQAEVLELT (170 aa). Residues 363–370 are G1; the sequence is GHVDHGKT. 363-370 provides a ligand contact to GTP; sequence GHVDHGKT. Positions 388–392 are G2; it reads GITQH. The interval 409-412 is G3; that stretch reads DTPG. Residue 409 to 413 participates in GTP binding; the sequence is DTPGH. Residues 463–466 form a G4 region; the sequence is TKID. The interval 499 to 501 is G5; sequence SAK.

The protein belongs to the TRAFAC class translation factor GTPase superfamily. Classic translation factor GTPase family. IF-2 subfamily.

Its subcellular location is the cytoplasm. One of the essential components for the initiation of protein synthesis. Protects formylmethionyl-tRNA from spontaneous hydrolysis and promotes its binding to the 30S ribosomal subunits. Also involved in the hydrolysis of GTP during the formation of the 70S ribosomal complex. The chain is Translation initiation factor IF-2 from Marinomonas sp. (strain MWYL1).